The sequence spans 1138 residues: BMP-2-inducible protein kinase (1138 aa).

Serine 13 is modified (phosphoserine). The Protein kinase domain occupies valine 48–phenylalanine 313. ATP is bound by residues leucine 54 to valine 62 and lysine 76. Aspartate 177 serves as the catalytic Proton acceptor. Disordered regions lie at residues threonine 355 to glutamine 435, asparagine 638 to alanine 831, and proline 906 to threonine 1018. Polar residues predominate over residues isoleucine 358 to threonine 390. A compositionally biased stretch (low complexity) spans valine 417 to glutamine 435. The residue at position 676 (serine 676) is a Phosphoserine. A compositionally biased stretch (polar residues) spans histidine 684–serine 701. Positions lysine 706–serine 715 are enriched in basic and acidic residues. Serine 733, serine 806, and serine 807 each carry phosphoserine. A compositionally biased stretch (basic and acidic residues) spans aspartate 787–proline 813. Residue threonine 819 is modified to Phosphothreonine. Serine 908 is subject to Phosphoserine. The segment covering threonine 915 to lysine 926 has biased composition (polar residues). Residues valine 951–arginine 965 are compositionally biased toward basic residues. A phosphoserine mark is found at serine 1010, serine 1012, serine 1013, serine 1020, serine 1022, serine 1087, and serine 1091. Positions threonine 1117–glutamine 1138 are disordered.

Belongs to the protein kinase superfamily. Ser/Thr protein kinase family. Autophosphorylated. Expressed in osteocytes and osteoblasts.

It localises to the nucleus. It catalyses the reaction L-seryl-[protein] + ATP = O-phospho-L-seryl-[protein] + ADP + H(+). It carries out the reaction L-threonyl-[protein] + ATP = O-phospho-L-threonyl-[protein] + ADP + H(+). May be involved in osteoblast differentiation. In Mus musculus (Mouse), this protein is BMP-2-inducible protein kinase (Bmp2k).